Reading from the N-terminus, the 338-residue chain is Large ribosomal subunit protein uL10 (338 aa).

The disordered stretch occupies residues 295–338 (EVPTIQPTTPPEKKEEEEKKEEEEEEAETVSEEELAEGLGALFG). The segment covering 312 to 330 (EKKEEEEEEAETVSEEELA) has biased composition (acidic residues).

Belongs to the universal ribosomal protein uL10 family. Part of the 50S ribosomal subunit. Forms part of the ribosomal stalk which helps the ribosome interact with GTP-bound translation factors. Forms a heptameric L10(L12)2(L12)2(L12)2 complex, where L10 forms an elongated spine to which the L12 dimers bind in a sequential fashion.

Functionally, forms part of the ribosomal stalk, playing a central role in the interaction of the ribosome with GTP-bound translation factors. This chain is Large ribosomal subunit protein uL10, found in Staphylothermus marinus (strain ATCC 43588 / DSM 3639 / JCM 9404 / F1).